We begin with the raw amino-acid sequence, 24 residues long: Glutathione S-transferase (24 aa).

This sequence belongs to the GST superfamily. In terms of assembly, monomer and homodimer.

The protein localises to the cytoplasm. It carries out the reaction RX + glutathione = an S-substituted glutathione + a halide anion + H(+). Its function is as follows. Conjugation of reduced glutathione to a wide number of exogenous and endogenous hydrophobic electrophiles. The polypeptide is Glutathione S-transferase (Pseudomonas sp. (strain CF600)).